We begin with the raw amino-acid sequence, 270 residues long: Acyl-[acyl-carrier-protein]--UDP-N-acetylglucosamine O-acyltransferase (270 aa).

This sequence belongs to the transferase hexapeptide repeat family. LpxA subfamily. In terms of assembly, homotrimer.

The protein resides in the cytoplasm. The enzyme catalyses a (3R)-hydroxyacyl-[ACP] + UDP-N-acetyl-alpha-D-glucosamine = a UDP-3-O-[(3R)-3-hydroxyacyl]-N-acetyl-alpha-D-glucosamine + holo-[ACP]. It functions in the pathway glycolipid biosynthesis; lipid IV(A) biosynthesis; lipid IV(A) from (3R)-3-hydroxytetradecanoyl-[acyl-carrier-protein] and UDP-N-acetyl-alpha-D-glucosamine: step 1/6. Its function is as follows. Involved in the biosynthesis of lipid A, a phosphorylated glycolipid that anchors the lipopolysaccharide to the outer membrane of the cell. The sequence is that of Acyl-[acyl-carrier-protein]--UDP-N-acetylglucosamine O-acyltransferase from Helicobacter pylori (strain HPAG1).